The primary structure comprises 341 residues: Zinc transporter ZIP11 (341 aa).

7 consecutive transmembrane segments (helical) span residues 12-32, 44-64, 72-92, 193-213, 262-284, 289-306, and 321-341; these read LLGT…VFVF, LGFA…APAV, GFGS…AAFV, IALL…AVGV, FWYG…FAVV, ILPY…YVIM, and LASW…VGLG.

It belongs to the ZIP transporter (TC 2.A.5) family.

The protein resides in the cell membrane. It is found in the nucleus. It localises to the cytoplasm. Its subcellular location is the golgi apparatus. It carries out the reaction Zn(2+)(in) = Zn(2+)(out). The catalysed reaction is Cu(2+)(in) = Cu(2+)(out). Its function is as follows. Zinc importer that regulates cytosolic zinc concentrations either via zinc influx from the extracellular compartment or efflux from intracellular organelles such as Golgi apparatus. May transport copper ions as well. The transport mechanism remains to be elucidated. This chain is Zinc transporter ZIP11 (SLC39A11), found in Bos taurus (Bovine).